Consider the following 218-residue polypeptide: uncharacterized protein (218 aa).

The Toprim domain occupies 111-193; the sequence is NSIYLVEGDF…ITKVIEIKAA (83 aa).

This is an uncharacterized protein from Mycoplasma genitalium (strain ATCC 33530 / DSM 19775 / NCTC 10195 / G37) (Mycoplasmoides genitalium).